The sequence spans 228 residues: uncharacterized protein (228 aa).

The 68-residue stretch at 11 to 78 (PPVNQQIYRI…PQRGSYVNKI (68 aa)) folds into the HTH gntR-type domain. A DNA-binding region (H-T-H motif) is located at residues 38–57 (EKEVSVRFNVSRQPVREAFI).

This is an uncharacterized protein from Escherichia coli O6:H1 (strain CFT073 / ATCC 700928 / UPEC).